A 438-amino-acid polypeptide reads, in one-letter code: Trigger factor (438 aa).

In terms of domain architecture, PPIase FKBP-type spans 163 to 248 (GDTAIIDFAG…VKEIKRKEIA (86 aa)).

Belongs to the FKBP-type PPIase family. Tig subfamily.

It is found in the cytoplasm. It carries out the reaction [protein]-peptidylproline (omega=180) = [protein]-peptidylproline (omega=0). Involved in protein export. Acts as a chaperone by maintaining the newly synthesized protein in an open conformation. Functions as a peptidyl-prolyl cis-trans isomerase. This is Trigger factor from Pelotomaculum thermopropionicum (strain DSM 13744 / JCM 10971 / SI).